We begin with the raw amino-acid sequence, 330 residues long: NADH-quinone oxidoreductase subunit H (330 aa).

The next 8 helical transmembrane spans lie at 3 to 23, 76 to 96, 118 to 138, 161 to 181, 188 to 208, 244 to 264, 272 to 292, and 307 to 327; these read AAFV…FSAL, PVFM…MAAI, VGLL…LLAG, EVVT…ISLV, AGGM…LFLI, FFIG…LIFL, FIPG…LFLW, and WLCW…TGIV.

The protein belongs to the complex I subunit 1 family. NDH-1 is composed of 14 different subunits. Subunits NuoA, H, J, K, L, M, N constitute the membrane sector of the complex.

Its subcellular location is the cell inner membrane. It catalyses the reaction a quinone + NADH + 5 H(+)(in) = a quinol + NAD(+) + 4 H(+)(out). NDH-1 shuttles electrons from NADH, via FMN and iron-sulfur (Fe-S) centers, to quinones in the respiratory chain. The immediate electron acceptor for the enzyme in this species is believed to be ubiquinone. Couples the redox reaction to proton translocation (for every two electrons transferred, four hydrogen ions are translocated across the cytoplasmic membrane), and thus conserves the redox energy in a proton gradient. This subunit may bind ubiquinone. This is NADH-quinone oxidoreductase subunit H from Nitratiruptor sp. (strain SB155-2).